We begin with the raw amino-acid sequence, 1368 residues long: DNA-directed RNA polymerase subunit beta (1368 aa).

Belongs to the RNA polymerase beta chain family. As to quaternary structure, the RNAP catalytic core consists of 2 alpha, 1 beta, 1 beta' and 1 omega subunit. When a sigma factor is associated with the core the holoenzyme is formed, which can initiate transcription.

It carries out the reaction RNA(n) + a ribonucleoside 5'-triphosphate = RNA(n+1) + diphosphate. Functionally, DNA-dependent RNA polymerase catalyzes the transcription of DNA into RNA using the four ribonucleoside triphosphates as substrates. The polypeptide is DNA-directed RNA polymerase subunit beta (Syntrophotalea carbinolica (strain DSM 2380 / NBRC 103641 / GraBd1) (Pelobacter carbinolicus)).